The chain runs to 195 residues: Ras-related protein Rab-31 (195 aa).

Residues glycine 16, glycine 18, lysine 19, serine 20, serine 21, aspartate 32, and histidine 33 each contribute to the GTP site. Serine 20 contacts Mg(2+). 2 short sequence motifs (switch) span residues histidine 30–serine 42 and alanine 63–serine 79. Phosphoserine is present on serine 36. GTP is bound by residues threonine 38, glycine 64, asparagine 119, aspartate 122, alanine 150, and lysine 151. Position 38 (threonine 38) interacts with Mg(2+). S-geranylgeranyl cysteine attachment occurs at residues cysteine 194 and cysteine 195.

Belongs to the small GTPase superfamily. Rab family. In terms of assembly, interacts with OCRL. Interacts with NGFR. Interacts (in GDP-bound form) with RIN3 and GAPVD1, which function as guanine exchange factors (GEF). Interacts (in GTP-bound form) with EEA1. Interacts with EGFR. Interacts (in GTP-bound form) with APPL2; interaction contributes to or enhances recruitment of APPL2 to the phagosomes; interaction enhances Fc-gamma receptor-mediated phagocytosis through PI3K/Akt signaling in macrophages. Requires Mg(2+) as cofactor. In terms of tissue distribution, highest expression in placenta and brain with lower levels in heart and lung. Not detected in liver, skeletal muscle, kidney or pancreas.

The protein resides in the golgi apparatus. The protein localises to the trans-Golgi network. Its subcellular location is the trans-Golgi network membrane. It is found in the early endosome. It localises to the cytoplasmic vesicle. The protein resides in the phagosome. The protein localises to the phagosome membrane. It catalyses the reaction GTP + H2O = GDP + phosphate + H(+). Its activity is regulated as follows. Regulated by guanine nucleotide exchange factors (GEFs) including RIN3 and GAPVD1 which promote the exchange of bound GDP for free GTP. Regulated by GTPase activating proteins (GAPs) which increase the GTP hydrolysis activity. Inhibited by GDP dissociation inhibitors (GDIs) which prevent Rab-GDP dissociation. Its function is as follows. The small GTPases Rab are key regulators of intracellular membrane trafficking, from the formation of transport vesicles to their fusion with membranes. Rabs cycle between an inactive GDP-bound form and an active GTP-bound form that is able to recruit to membranes different set of downstream effectors directly responsible for vesicle formation, movement, tethering and fusion. Required for the integrity and for normal function of the Golgi apparatus and the trans-Golgi network. Plays a role in insulin-stimulated translocation of GLUT4 to the cell membrane. Plays a role in M6PR transport from the trans-Golgi network to endosomes. Plays a role in the internalization of EGFR from the cell membrane into endosomes. Plays a role in the maturation of phagosomes that engulf pathogens, such as S.aureus and M.tuberculosis. This Homo sapiens (Human) protein is Ras-related protein Rab-31.